The chain runs to 448 residues: FAD-dependent monooxygenase srdH (448 aa).

The FAD site is built by E32 and R107. Q227 is an active-site residue. D313 is an FAD binding site.

It belongs to the paxM FAD-dependent monooxygenase family. Requires FAD as cofactor.

Highly reducing polyketide synthase; part of the gene cluster that mediates the biosynthesis of sordarial, a salicylic aldehyde structurally related to the phytotoxin pyriculol. The most interesting aspect of this pathway is formation of an aromatic product from the highly reducing polyketide synthase srdA. SrdA synthesizes a reduced polyketide chain from one molecule of acetyl-CoA and five molecules of malonyl-CoA. The polyketide chain is then reductively released as an aldehyde. The oxidoreductases srdC, srdD and srdE then oxidize one of the hydroxy groups to facilitate the intramolecular aldol condensation, followed by dehydration to yield a salicylic aldehyde. This aldehyde can undergo facile reduction by endogenous reductases to yield the alcohol 1-hydroxy-2-hydroxymethyl-3-pent-1,3-dienylbenzene. The flavin-dependent srdI counteract against the propensity of the aldehydes to be reduced under physiological conditions and is responsible for reoxidizing 1-hydroxy-2-hydroxymethyl-3-pent-1,3-dienylbenzene back to the salicylic aldehyde. This salicylic aldehyde is then selectively epoxidized by the cupin-domain-containing oxidoreductase srdB to yield the epoxide, which can be hydrolyzed stereoselectively by the hydrolase srdG to give the final product sordarial. This chain is FAD-dependent monooxygenase srdH, found in Neurospora crassa (strain ATCC 24698 / 74-OR23-1A / CBS 708.71 / DSM 1257 / FGSC 987).